The chain runs to 727 residues: Tubulin polyglutamylase TTLL11 (727 aa).

The span at methionine 1–alanine 12 shows a compositional bias: basic and acidic residues. A disordered region spans residues methionine 1–alanine 88. Residues aspartate 17–alanine 34 show a composition bias toward low complexity. Composition is skewed to basic and acidic residues over residues aspartate 49 to glycine 63 and histidine 72 to valine 81. A TTL domain is found at proline 125–threonine 477. Residues lysine 246, glutamine 252–glycine 253, glutamine 279–isoleucine 282, and lysine 292–aspartate 294 each bind ATP. Residue glutamine 252 participates in a protein binding. Residue arginine 318 coordinates L-glutamate. Threonine 340–asparagine 341 lines the ATP pocket. Positions 342, 343, and 362 each coordinate L-glutamate. Mg(2+) is bound by residues aspartate 425, glutamate 438, and asparagine 440. Residues leucine 464 to lysine 566 are c-MTBD region. Lysine 470 provides a ligand contact to L-glutamate. 2 disordered regions span residues lysine 530–proline 551 and arginine 694–serine 727.

The protein belongs to the tubulin--tyrosine ligase family. The cofactor is Mg(2+). Highly expressed in brain, kidney, liver, lung, muscle and testis. Expressed in heart, spleen and trachea. In the brain, expressed in ependymal cilia, cortex, corpus callosum and striatum.

It is found in the cytoplasm. Its subcellular location is the cytoskeleton. The protein resides in the cilium basal body. The enzyme catalyses L-glutamyl-[protein] + L-glutamate + ATP = gamma-L-glutamyl-L-glutamyl-[protein] + ADP + phosphate + H(+). The catalysed reaction is (L-glutamyl)(n)-gamma-L-glutamyl-L-glutamyl-[protein] + L-glutamate + ATP = (L-glutamyl)(n+1)-gamma-L-glutamyl-L-glutamyl-[protein] + ADP + phosphate + H(+). Polyglutamylase which modifies tubulin, generating polyglutamate side chains of variable lengths on the gamma-carboxyl group of specific glutamate residues within the C-terminal tail of tubulin. Preferentially mediates ATP-dependent polyglutamate long side-chain elongation over the initiation step of the polyglutamylation reaction. Preferentially modifies the alpha-tubulin tail over a beta-tail. Required for CCSAP localization to both spindle and cilia microtubules. Promotes tubulin polyglutamylation which stimulates spastin/SPAST-mediated microtubule severing, thereby regulating microtubule functions. This chain is Tubulin polyglutamylase TTLL11, found in Mus musculus (Mouse).